The chain runs to 59 residues: Toxin TxpA (59 aa).

The helical transmembrane segment at 7–27 (LMVMIGFANLIGGIMTWVISL) threads the bilayer.

The protein localises to the cell membrane. Functionally, toxic component of a type I toxin-antitoxin (TA) system. Overexpression of txpA causes cell lysis; the TxpA protein has been suggested to act on the cell membrane or might possibly block cell wall synthesis. Overexpression in E.coli is not toxic. This is Toxin TxpA from Bacillus subtilis (strain 168).